Consider the following 189-residue polypeptide: Elongation factor P (189 aa).

At K34 the chain carries N6-(3,6-diaminohexanoyl)-5-hydroxylysine.

This sequence belongs to the elongation factor P family. In terms of processing, may be beta-lysylated on the epsilon-amino group of Lys-34 by the combined action of EpmA and EpmB, and then hydroxylated on the C5 position of the same residue by EpmC (if this protein is present). Lysylation is critical for the stimulatory effect of EF-P on peptide-bond formation. The lysylation moiety may extend toward the peptidyltransferase center and stabilize the terminal 3-CCA end of the tRNA. Hydroxylation of the C5 position on Lys-34 may allow additional potential stabilizing hydrogen-bond interactions with the P-tRNA.

It is found in the cytoplasm. It participates in protein biosynthesis; polypeptide chain elongation. In terms of biological role, involved in peptide bond synthesis. Alleviates ribosome stalling that occurs when 3 or more consecutive Pro residues or the sequence PPG is present in a protein, possibly by augmenting the peptidyl transferase activity of the ribosome. Modification of Lys-34 is required for alleviation. This chain is Elongation factor P, found in Alcanivorax borkumensis (strain ATCC 700651 / DSM 11573 / NCIMB 13689 / SK2).